The following is a 307-amino-acid chain: N-acetylmuramic acid 6-phosphate etherase (307 aa).

Residues 59–222 (TTKALSQGGK…STGVMVRLGK (164 aa)) enclose the SIS domain. Glu-87 functions as the Proton donor in the catalytic mechanism. Glu-118 is an active-site residue.

It belongs to the GCKR-like family. MurNAc-6-P etherase subfamily. Homodimer.

It catalyses the reaction N-acetyl-D-muramate 6-phosphate + H2O = N-acetyl-D-glucosamine 6-phosphate + (R)-lactate. It participates in amino-sugar metabolism; N-acetylmuramate degradation. In terms of biological role, specifically catalyzes the cleavage of the D-lactyl ether substituent of MurNAc 6-phosphate, producing GlcNAc 6-phosphate and D-lactate. The polypeptide is N-acetylmuramic acid 6-phosphate etherase (Trichodesmium erythraeum (strain IMS101)).